Reading from the N-terminus, the 104-residue chain is Flagellar hook-basal body complex protein FliE (104 aa).

The protein belongs to the FliE family.

The protein localises to the bacterial flagellum basal body. The protein is Flagellar hook-basal body complex protein FliE of Salmonella agona (strain SL483).